We begin with the raw amino-acid sequence, 388 residues long: Succinate--CoA ligase [ADP-forming] subunit beta (388 aa).

One can recognise an ATP-grasp domain in the interval 9 to 245 (KELLASYGLP…KSQENERELK (237 aa)). Residues lysine 46, 53-55 (GRG), glutamate 100, tyrosine 103, and glutamate 108 contribute to the ATP site. Asparagine 200 and aspartate 214 together coordinate Mg(2+). Residues asparagine 265 and 322–324 (GIV) each bind substrate.

The protein belongs to the succinate/malate CoA ligase beta subunit family. As to quaternary structure, heterotetramer of two alpha and two beta subunits. The cofactor is Mg(2+).

It catalyses the reaction succinate + ATP + CoA = succinyl-CoA + ADP + phosphate. It carries out the reaction GTP + succinate + CoA = succinyl-CoA + GDP + phosphate. It functions in the pathway carbohydrate metabolism; tricarboxylic acid cycle; succinate from succinyl-CoA (ligase route): step 1/1. Functionally, succinyl-CoA synthetase functions in the citric acid cycle (TCA), coupling the hydrolysis of succinyl-CoA to the synthesis of either ATP or GTP and thus represents the only step of substrate-level phosphorylation in the TCA. The beta subunit provides nucleotide specificity of the enzyme and binds the substrate succinate, while the binding sites for coenzyme A and phosphate are found in the alpha subunit. The chain is Succinate--CoA ligase [ADP-forming] subunit beta from Neisseria meningitidis serogroup A / serotype 4A (strain DSM 15465 / Z2491).